The chain runs to 60 residues: Large ribosomal subunit protein bL32 (60 aa).

Positions Met1–Glu60 are disordered. Positions Ser11–Leu22 are enriched in basic and acidic residues.

Belongs to the bacterial ribosomal protein bL32 family.

The protein is Large ribosomal subunit protein bL32 of Ectopseudomonas mendocina (strain ymp) (Pseudomonas mendocina).